The following is a 359-amino-acid chain: 3-dehydroquinate synthase (359 aa).

This sequence belongs to the archaeal-type DHQ synthase family.

It catalyses the reaction 2-amino-2,3,7-trideoxy-D-lyxo-hept-6-ulosonate + NAD(+) + H2O = 3-dehydroquinate + NH4(+) + NADH + H(+). Its function is as follows. Catalyzes the oxidative deamination and cyclization of 2-amino-3,7-dideoxy-D-threo-hept-6-ulosonic acid (ADH) to yield 3-dehydroquinate (DHQ), which is fed into the canonical shikimic pathway of aromatic amino acid biosynthesis. This is 3-dehydroquinate synthase from Methanosphaera stadtmanae (strain ATCC 43021 / DSM 3091 / JCM 11832 / MCB-3).